A 371-amino-acid chain; its full sequence is UPF0284 protein tll2306 (371 aa).

The protein belongs to the UPF0284 family.

The sequence is that of UPF0284 protein tll2306 from Thermosynechococcus vestitus (strain NIES-2133 / IAM M-273 / BP-1).